We begin with the raw amino-acid sequence, 70 residues long: Biotin carboxyl carrier protein of acetyl-CoA carboxylase (70 aa).

Residues 1–69 enclose the Biotinyl-binding domain; it reads GTVVAPMVGL…QDGIKLFALK (69 aa). Lys-35 carries the post-translational modification N6-biotinyllysine.

The protein localises to the plastid. It is found in the chloroplast. The protein operates within lipid metabolism; fatty acid biosynthesis. In terms of biological role, this protein is a component of the acetyl coenzyme A carboxylase complex; first, biotin carboxylase catalyzes the carboxylation of the carrier protein and then the transcarboxylase transfers the carboxyl group to form malonyl-CoA. In Solanum lycopersicum (Tomato), this protein is Biotin carboxyl carrier protein of acetyl-CoA carboxylase.